The chain runs to 513 residues: L-threonine dehydratase biosynthetic IlvA (513 aa).

Lys61 is modified (N6-(pyridoxal phosphate)lysine). Residues Asn88, 187 to 191 (GGGGL), and Ser314 contribute to the pyridoxal 5'-phosphate site. ACT-like domains follow at residues 338-409 (ALLA…DLSN) and 432-504 (RLYS…DVTE).

This sequence belongs to the serine/threonine dehydratase family. Homotetramer. Pyridoxal 5'-phosphate is required as a cofactor.

The enzyme catalyses L-threonine = 2-oxobutanoate + NH4(+). Its pathway is amino-acid biosynthesis; L-isoleucine biosynthesis; 2-oxobutanoate from L-threonine: step 1/1. Functionally, catalyzes the anaerobic formation of alpha-ketobutyrate and ammonia from threonine in a two-step reaction. The first step involved a dehydration of threonine and a production of enamine intermediates (aminocrotonate), which tautomerizes to its imine form (iminobutyrate). Both intermediates are unstable and short-lived. The second step is the nonenzymatic hydrolysis of the enamine/imine intermediates to form 2-ketobutyrate and free ammonia. In the low water environment of the cell, the second step is accelerated by RidA. This Pasteurella multocida (strain Pm70) protein is L-threonine dehydratase biosynthetic IlvA (ilvA).